The chain runs to 455 residues: Probable glycine dehydrogenase (decarboxylating) subunit 1 (455 aa).

This sequence belongs to the GcvP family. N-terminal subunit subfamily. The glycine cleavage system is composed of four proteins: P, T, L and H. In this organism, the P 'protein' is a heterodimer of two subunits.

It catalyses the reaction N(6)-[(R)-lipoyl]-L-lysyl-[glycine-cleavage complex H protein] + glycine + H(+) = N(6)-[(R)-S(8)-aminomethyldihydrolipoyl]-L-lysyl-[glycine-cleavage complex H protein] + CO2. Its function is as follows. The glycine cleavage system catalyzes the degradation of glycine. The P protein binds the alpha-amino group of glycine through its pyridoxal phosphate cofactor; CO(2) is released and the remaining methylamine moiety is then transferred to the lipoamide cofactor of the H protein. This Francisella tularensis subsp. tularensis (strain FSC 198) protein is Probable glycine dehydrogenase (decarboxylating) subunit 1.